We begin with the raw amino-acid sequence, 481 residues long: Protein nucleotidyltransferase YdiU (481 aa).

Glycine 85, glycine 87, arginine 88, lysine 108, aspartate 120, glycine 121, arginine 171, and arginine 178 together coordinate ATP. Aspartate 248 functions as the Proton acceptor in the catalytic mechanism. Positions 249 and 258 each coordinate Mg(2+). ATP is bound at residue aspartate 258. Residues 458–481 (HPGLAEFQQPPTPEQKGLQLSCSS) are disordered.

It belongs to the SELO family. Mg(2+) is required as a cofactor. The cofactor is Mn(2+).

The enzyme catalyses L-seryl-[protein] + ATP = 3-O-(5'-adenylyl)-L-seryl-[protein] + diphosphate. The catalysed reaction is L-threonyl-[protein] + ATP = 3-O-(5'-adenylyl)-L-threonyl-[protein] + diphosphate. It catalyses the reaction L-tyrosyl-[protein] + ATP = O-(5'-adenylyl)-L-tyrosyl-[protein] + diphosphate. It carries out the reaction L-histidyl-[protein] + UTP = N(tele)-(5'-uridylyl)-L-histidyl-[protein] + diphosphate. The enzyme catalyses L-seryl-[protein] + UTP = O-(5'-uridylyl)-L-seryl-[protein] + diphosphate. The catalysed reaction is L-tyrosyl-[protein] + UTP = O-(5'-uridylyl)-L-tyrosyl-[protein] + diphosphate. Functionally, nucleotidyltransferase involved in the post-translational modification of proteins. It can catalyze the addition of adenosine monophosphate (AMP) or uridine monophosphate (UMP) to a protein, resulting in modifications known as AMPylation and UMPylation. This chain is Protein nucleotidyltransferase YdiU, found in Hydrogenovibrio crunogenus (strain DSM 25203 / XCL-2) (Thiomicrospira crunogena).